The primary structure comprises 299 residues: 4-hydroxybenzoate octaprenyltransferase (299 aa).

Transmembrane regions (helical) follow at residues 31–51, 54–74, 105–125, 148–168, 177–197, 241–261, and 277–297; these read IGIY…ADGL, WDVL…GCVI, VLFF…TNPL, QLPQ…AFAA, IWVL…FYAM, FGLG…FAYQ, and FLHN…DKLI.

It belongs to the UbiA prenyltransferase family. The cofactor is Mg(2+).

It is found in the cell inner membrane. It carries out the reaction all-trans-octaprenyl diphosphate + 4-hydroxybenzoate = 4-hydroxy-3-(all-trans-octaprenyl)benzoate + diphosphate. Its pathway is cofactor biosynthesis; ubiquinone biosynthesis. Catalyzes the prenylation of para-hydroxybenzoate (PHB) with an all-trans polyprenyl group. Mediates the second step in the final reaction sequence of ubiquinone-8 (UQ-8) biosynthesis, which is the condensation of the polyisoprenoid side chain with PHB, generating the first membrane-bound Q intermediate 3-octaprenyl-4-hydroxybenzoate. The protein is 4-hydroxybenzoate octaprenyltransferase of Saccharophagus degradans (strain 2-40 / ATCC 43961 / DSM 17024).